We begin with the raw amino-acid sequence, 488 residues long: MTVETPDFVMPDFSLALPEIWMLVMACVVLVVDLYSQDSRRGMTFMLTQFTLVVAGVLAIVAHWGEPAVTFSGTYVSDNLAAVLKVAIAGLGFLSFAYCRDYLEDRGLLKGEYFVLGLFSLLGMMIMASAHNLMTVYLGLELLALTLYAMVAFNRDNLRATEAAMKYFVLGAIASGILLYGMSLIYGATGSLNLAEVAVYAGEQGANDWLLLLGMTLVVVGVAFKFGAVPFHTWMPDVYQGAPTTVALFASTAPKVAAVALFVRLLSEGLGPIHDQWQPMIILLAVASLVVGNLAALAQTNIKRMLAYSTASHVGFILLGFIAGTAEGYSTALFYAITYGIMSAGAFGLIILLSHRGFEAENISDFKGLNDRSPAMALMMLLLMFSMTGIPGTVGFYAKWLVIKSVVDVGLVWLAVFAVVFAVIGAFYYLRVLKFVYFDKPETDAPPQTGSPAMRGLLVANGIAVLLLGIFPDSLISACMAAFGVSYG.

Helical transmembrane passes span 15-35 (LALP…VDLY), 42-62 (GMTF…AIVA), 79-99 (NLAA…FAYC), 108-128 (LLKG…MIMA), 133-153 (LMTV…MVAF), 168-188 (FVLG…IYGA), 209-229 (WLLL…FGAV), 243-263 (PTTV…ALFV), 277-297 (WQPM…LAAL), 305-325 (MLAY…IAGT), 333-353 (LFYA…IILL), 376-396 (MALM…TVGF), 409-429 (VGLV…AFYY), and 456-476 (GLLV…DSLI).

The protein belongs to the complex I subunit 2 family. In terms of assembly, NDH-1 is composed of 14 different subunits. Subunits NuoA, H, J, K, L, M, N constitute the membrane sector of the complex.

The protein localises to the cell inner membrane. It carries out the reaction a quinone + NADH + 5 H(+)(in) = a quinol + NAD(+) + 4 H(+)(out). In terms of biological role, NDH-1 shuttles electrons from NADH, via FMN and iron-sulfur (Fe-S) centers, to quinones in the respiratory chain. The immediate electron acceptor for the enzyme in this species is believed to be ubiquinone. Couples the redox reaction to proton translocation (for every two electrons transferred, four hydrogen ions are translocated across the cytoplasmic membrane), and thus conserves the redox energy in a proton gradient. This is NADH-quinone oxidoreductase subunit N from Alkalilimnicola ehrlichii (strain ATCC BAA-1101 / DSM 17681 / MLHE-1).